A 316-amino-acid chain; its full sequence is Lipoyl synthase (316 aa).

The [4Fe-4S] cluster site is built by cysteine 66, cysteine 71, cysteine 77, cysteine 92, cysteine 96, cysteine 99, and serine 306. The Radical SAM core domain maps to 78-295; the sequence is FNRGTATFMI…NLIAFDLGFK (218 aa).

The protein belongs to the radical SAM superfamily. Lipoyl synthase family. Requires [4Fe-4S] cluster as cofactor.

It localises to the cytoplasm. It catalyses the reaction [[Fe-S] cluster scaffold protein carrying a second [4Fe-4S](2+) cluster] + N(6)-octanoyl-L-lysyl-[protein] + 2 oxidized [2Fe-2S]-[ferredoxin] + 2 S-adenosyl-L-methionine + 4 H(+) = [[Fe-S] cluster scaffold protein] + N(6)-[(R)-dihydrolipoyl]-L-lysyl-[protein] + 4 Fe(3+) + 2 hydrogen sulfide + 2 5'-deoxyadenosine + 2 L-methionine + 2 reduced [2Fe-2S]-[ferredoxin]. Its pathway is protein modification; protein lipoylation via endogenous pathway; protein N(6)-(lipoyl)lysine from octanoyl-[acyl-carrier-protein]: step 2/2. In terms of biological role, catalyzes the radical-mediated insertion of two sulfur atoms into the C-6 and C-8 positions of the octanoyl moiety bound to the lipoyl domains of lipoate-dependent enzymes, thereby converting the octanoylated domains into lipoylated derivatives. In Wigglesworthia glossinidia brevipalpis, this protein is Lipoyl synthase.